The sequence spans 475 residues: Polyphosphate:AMP phosphotransferase (475 aa).

2 PPK2 regions span residues 18-222 (LDLI…LTAL) and 256-472 (ANYK…KADR).

The protein belongs to the polyphosphate kinase 2 (PPK2) family. Class II subfamily. In terms of assembly, homodimer and homotetramer. The cofactor is Mg(2+).

The catalysed reaction is [phosphate](n) + ADP = [phosphate](n+1) + AMP. In terms of biological role, uses inorganic polyphosphate (polyP) as a donor to convert AMP to ADP. Can also use GMP, UMP, CMP, TMP or deoxyribonucleoside monophosphates, with lower efficiency. Cannot use low-molecular weight polyP as donors. Can also catalyze the synthesis of polyP from ADP or GDP, with lower efficiency. This chain is Polyphosphate:AMP phosphotransferase, found in Acinetobacter johnsonii.